We begin with the raw amino-acid sequence, 372 residues long: L-selectin (372 aa).

An N-terminal signal peptide occupies residues 1 to 28 (MIFPWKCQSTQRDLWNIFKLWGWTMLCC). Positions 29–38 (DFLAHHGTDC) are excised as a propeptide. The Extracellular segment spans residues 39-332 (WTYHYSEKPM…FSMIKEGDYN (294 aa)). One can recognise a C-type lectin domain in the interval 55–155 (RFCRDNYTDL…ACHKLKAALC (101 aa)). 9 disulfides stabilise this stretch: Cys57–Cys155, Cys128–Cys147, Cys160–Cys171, Cys165–Cys180, Cys182–Cys191, Cys197–Cys241, Cys227–Cys254, Cys259–Cys303, and Cys289–Cys316. Asn60 and Asn104 each carry an N-linked (GlcNAc...) asparagine glycan. Residues Glu118, Asn120, Glu126, Asn143, and Asp144 each coordinate Ca(2+). An EGF-like domain is found at 156–192 (YTASCQPWSCSGHGECVEIINNYTCNCDVGYYGPQCQ). The N-linked (GlcNAc...) asparagine glycan is linked to Asn177. Sushi domains are found at residues 195-256 (IQCE…TCQV) and 257-318 (IQCE…ICQK). Asn232, Asn246, and Asn271 each carry an N-linked (GlcNAc...) asparagine glycan. A helical transmembrane segment spans residues 333–355 (PLFIPVAVMVTAFSGLAFIIWLA). Topologically, residues 356 to 372 (RRLKKGKKSKRSMNDPY) are cytoplasmic.

Belongs to the selectin/LECAM family. As to quaternary structure, interaction with SELPLG/PSGL1 and PODXL2 is required for promoting recruitment and rolling of leukocytes. This interaction is dependent on the sialyl Lewis X glycan modification of SELPLG and PODXL2, and tyrosine sulfation modifications of SELPLG. Sulfation on 'Tyr-51' of SELPLG is important for L-selectin binding. Post-translationally, N-glycosylated. Expressed in B-cell lines and T-lymphocytes.

The protein localises to the cell membrane. Functionally, calcium-dependent lectin that mediates cell adhesion by binding to glycoproteins on neighboring cells. Mediates the adherence of lymphocytes to endothelial cells of high endothelial venules in peripheral lymph nodes. Promotes initial tethering and rolling of leukocytes in endothelia. The protein is L-selectin (SELL) of Homo sapiens (Human).